The following is a 367-amino-acid chain: tRNA-specific 2-thiouridylase MnmA 2 (367 aa).

ATP contacts are provided by residues 10-17 (GMSGGVDS) and M36. The tract at residues 96–98 (NPD) is interaction with target base in tRNA. C101 functions as the Nucleophile in the catalytic mechanism. A disulfide bond links C101 and C197. G125 is an ATP binding site. The interval 147-149 (KDQ) is interaction with tRNA. C197 acts as the Cysteine persulfide intermediate in catalysis. The tract at residues 314 to 315 (RY) is interaction with tRNA.

It belongs to the MnmA/TRMU family.

Its subcellular location is the cytoplasm. It carries out the reaction S-sulfanyl-L-cysteinyl-[protein] + uridine(34) in tRNA + AH2 + ATP = 2-thiouridine(34) in tRNA + L-cysteinyl-[protein] + A + AMP + diphosphate + H(+). In terms of biological role, catalyzes the 2-thiolation of uridine at the wobble position (U34) of tRNA, leading to the formation of s(2)U34. The polypeptide is tRNA-specific 2-thiouridylase MnmA 2 (Aliarcobacter butzleri (strain RM4018) (Arcobacter butzleri)).